The chain runs to 602 residues: Leucine-rich repeat-containing protein 40 (602 aa).

A Phosphoserine modification is found at serine 71. 20 LRR repeats span residues 83 to 104, 106 to 127, 129 to 150, 152 to 173, 175 to 196, 198 to 219, 221 to 242, 244 to 265, 266 to 286, 290 to 311, 313 to 335, 336 to 356, 400 to 421, 426 to 447, 450 to 472, 473 to 494, 496 to 517, 519 to 540, 543 to 564, and 566 to 586; these read DLTK…LRLL, ALTV…IREL, NLQK…ITNL, NLKC…FEQL, NLED…FSSL, SLVR…INRM, RLKH…LAGM, SLEL…PSCS, LLKE…EHLK, SILV…IILL, SLER…GNLH, LKFL…IISK, TLKI…VFDA, IVTS…MVEL, MVSD…CVLQ, KLTF…MESL, RLQT…LYRI, TLET…KMKM, NLTT…LGNC, and NLRT…AILM.

This chain is Leucine-rich repeat-containing protein 40 (LRRC40), found in Homo sapiens (Human).